The sequence spans 660 residues: Arginine--tRNA ligase, cytoplasmic (660 aa).

Positions 1–72 (MELPVCFYEE…LEEKKKSSKS (72 aa)) are could be involved in the assembly of the multisynthetase complex. L-arginine is bound by residues 200 to 202 (SPN), His211, Tyr384, Asp388, and Gln412. Positions 201 to 212 (PNIAKEMHVGHL) match the 'HIGH' region motif. The tract at residues 529–543 (NTAAYLLYAYTRIRS) is interaction with tRNA.

This sequence belongs to the class-I aminoacyl-tRNA synthetase family. Monomer; also part of a multisubunit complex that groups tRNA ligases for Arg, Asp, Glu, Gln, Ile, Leu, Lys, Met and Pro.

It localises to the cytoplasm. The protein localises to the cytosol. The enzyme catalyses tRNA(Arg) + L-arginine + ATP = L-arginyl-tRNA(Arg) + AMP + diphosphate. Its function is as follows. Forms part of a macromolecular complex that catalyzes the attachment of specific amino acids to cognate tRNAs during protein synthesis. The chain is Arginine--tRNA ligase, cytoplasmic (rars1) from Xenopus tropicalis (Western clawed frog).